We begin with the raw amino-acid sequence, 144 residues long: 3-hydroxyacyl-[acyl-carrier-protein] dehydratase FabZ (144 aa).

The active site involves H51.

The protein belongs to the thioester dehydratase family. FabZ subfamily.

The protein localises to the cytoplasm. The enzyme catalyses a (3R)-hydroxyacyl-[ACP] = a (2E)-enoyl-[ACP] + H2O. Functionally, involved in unsaturated fatty acids biosynthesis. Catalyzes the dehydration of short chain beta-hydroxyacyl-ACPs and long chain saturated and unsaturated beta-hydroxyacyl-ACPs. The polypeptide is 3-hydroxyacyl-[acyl-carrier-protein] dehydratase FabZ (Clostridium botulinum (strain Okra / Type B1)).